The sequence spans 99 residues: Cyclin-dependent kinases regulatory subunit (99 aa).

It belongs to the CKS family. In terms of assembly, forms a homohexamer that can probably bind six kinase subunits.

Binds to the catalytic subunit of the cyclin dependent kinases (Cdc2) and is essential for their biological function. The sequence is that of Cyclin-dependent kinases regulatory subunit from Leishmania mexicana.